The following is a 355-amino-acid chain: uncharacterized protein (355 aa).

A run of 3 helical transmembrane segments spans residues serine 275 to phenylalanine 295, tryptophan 301 to valine 321, and isoleucine 330 to leucine 350.

This sequence to M.tuberculosis Rv0497.

It is found in the cell membrane. This is an uncharacterized protein from Mycobacterium leprae (strain TN).